The primary structure comprises 514 residues: CENP-B homolog protein 1 (514 aa).

The region spanning aspartate 69–alanine 144 is the HTH CENPB-type domain.

The protein resides in the nucleus. It localises to the chromosome. It is found in the centromere. Functionally, binds to centromeric K-type repeat DNA and ARS3002 DNA. The CBH-binding consensus sequence is Py-Pu-A-T-A-T-Py-Pu-T-A. This Schizosaccharomyces pombe (strain 972 / ATCC 24843) (Fission yeast) protein is CENP-B homolog protein 1 (cbh1).